The chain runs to 356 residues: MFKSLVRKSSAFQPLKYGGKYTVTLIPGDGIGRETSNAVTEIFKTANVPIEFEEIDVTGMEKNNKSSGDALHEAIQSLKRNKVGLKGILFTPFEKGGHTSFNVALRKELDIYASLVLIKNIPGFKTRHDNVDFAIIRENTEGEYSGLEHQSVPGVVESLKIITEYKSKRIAQFAFDFALQNGRKSVTCIHKANIMKLADGLFRRTFYDVANGYDAITPKDLIVDNASMQAVSRPQQFDVLVMPNLYGSILSNIGSALVGGPGVIPGANFGRDYALFEPGCRHVGLSITGRGEANPTAAILSACLMLRHLGLKDYADLINAATYSVIEEGKTLTKDLGGSASTGDFTHAILERMESL.

3 residues coordinate substrate: Arg-106, Arg-137, and Asp-224. Asp-224 lines the Mg(2+) pocket.

It belongs to the isocitrate and isopropylmalate dehydrogenases family. In terms of assembly, octamer of two non-identical subunits IDH1 and IDH2. The cofactor is Mg(2+). Mn(2+) serves as cofactor.

The protein resides in the mitochondrion. The enzyme catalyses D-threo-isocitrate + NAD(+) = 2-oxoglutarate + CO2 + NADH. In terms of biological role, performs an essential role in the oxidative function of the citric acid cycle. Also binds RNA; specifically to the 5'-untranslated leaders of mitochondrial mRNAs. This is Isocitrate dehydrogenase [NAD] subunit 1, mitochondrial (idh1) from Schizosaccharomyces pombe (strain 972 / ATCC 24843) (Fission yeast).